We begin with the raw amino-acid sequence, 661 residues long: UvrABC system protein B (661 aa).

The 390-residue stretch at 25-414 folds into the Helicase ATP-binding domain; sequence AGLSSKKRSQ…GTVVELIIRP (390 aa). 38–45 contacts ATP; sequence GITGSGKT. A Beta-hairpin motif is present at residues 91–114; that stretch reads YYDYYQPEAYIARTDTFIEKDSSI. In terms of domain architecture, Helicase C-terminal spans 430–592; it reads QVEDLISEIQ…IIPKTINRAI (163 aa). A UVR domain is found at 621–656; it reads KTHIDKLKKEMLKAASNLEFEQAVKLRDQLKTLEEA.

Belongs to the UvrB family. As to quaternary structure, forms a heterotetramer with UvrA during the search for lesions. Interacts with UvrC in an incision complex.

It is found in the cytoplasm. Its function is as follows. The UvrABC repair system catalyzes the recognition and processing of DNA lesions. A damage recognition complex composed of 2 UvrA and 2 UvrB subunits scans DNA for abnormalities. Upon binding of the UvrA(2)B(2) complex to a putative damaged site, the DNA wraps around one UvrB monomer. DNA wrap is dependent on ATP binding by UvrB and probably causes local melting of the DNA helix, facilitating insertion of UvrB beta-hairpin between the DNA strands. Then UvrB probes one DNA strand for the presence of a lesion. If a lesion is found the UvrA subunits dissociate and the UvrB-DNA preincision complex is formed. This complex is subsequently bound by UvrC and the second UvrB is released. If no lesion is found, the DNA wraps around the other UvrB subunit that will check the other stand for damage. The protein is UvrABC system protein B of Rickettsia conorii (strain ATCC VR-613 / Malish 7).